We begin with the raw amino-acid sequence, 710 residues long: Polyribonucleotide nucleotidyltransferase (710 aa).

Residues D501 and D507 each contribute to the Mg(2+) site. Residues 568–628 form the KH domain; that stretch reads PKVQMFQIKP…ETVKQAILFI (61 aa). In terms of domain architecture, S1 motif spans 638–710; sequence NSIYHAHISR…RIDFVLISKK (73 aa).

Belongs to the polyribonucleotide nucleotidyltransferase family. It depends on Mg(2+) as a cofactor.

The protein localises to the cytoplasm. It catalyses the reaction RNA(n+1) + phosphate = RNA(n) + a ribonucleoside 5'-diphosphate. Involved in mRNA degradation. Catalyzes the phosphorolysis of single-stranded polyribonucleotides processively in the 3'- to 5'-direction. This chain is Polyribonucleotide nucleotidyltransferase, found in Phytoplasma australiense.